The primary structure comprises 1157 residues: uncharacterized protein (1157 aa).

Positions 1 to 10 (MDPHWKRHDS) are enriched in basic and acidic residues. Disordered regions lie at residues 1–35 (MDPH…QRFG), 159–233 (QTTP…SVEP), and 478–498 (KNQS…GKGP). Low complexity-rich tracts occupy residues 18 to 31 (SPSA…PSSA) and 181 to 197 (SAGT…NPNF). Positions 208–228 (QEWQQSPLESPLSMHSLQESL) are enriched in polar residues. A CSD2 domain is found at 501-574 (VWFKPSDKRI…KVEYKAILHD (74 aa)). An RNB domain is found at 608-921 (LRDKLTFMIG…ICVQRQLREA (314 aa)). A DIS3L2 C-terminal domain is found at 973–1030 (GLVKHKAFVLAVDQEYIDIVIYEFGLERRISLDLLPLSNCDFNEQKHELYLSWRTNAS). Positions 1084-1113 (YSKARGNDSTSKTAKSSSGNQDISGDGKLH) are disordered. Positions 1090–1106 (NDSTSKTAKSSSGNQDI) are enriched in polar residues.

Belongs to the RNR ribonuclease family.

The protein localises to the cytoplasm. This is an uncharacterized protein from Schizosaccharomyces pombe (strain 972 / ATCC 24843) (Fission yeast).